A 338-amino-acid chain; its full sequence is Limbic system-associated membrane protein (338 aa).

An N-terminal signal peptide occupies residues 1-28 (MVARAQPDRKQLPLVLLRLLCLLPTGLP). 3 Ig-like C2-type domains span residues 29-122 (VRSV…PKTS), 132-214 (PKIS…VRVT), and 219-306 (PTIT…LYLY). N-linked (GlcNAc...) asparagine glycosylation is found at N40, N66, N136, and N148. Cysteines 53 and 111 form a disulfide. 2 disulfide bridges follow: C153–C197 and C239–C290. N279, N287, N300, and N315 each carry an N-linked (GlcNAc...) asparagine glycan. N315 carries GPI-anchor amidated asparagine lipidation. A propeptide spans 316–338 (GSVSLAVPLWLLAASLLCLLSKC) (removed in mature form).

Belongs to the immunoglobulin superfamily. IgLON family.

Its subcellular location is the cell membrane. Mediates selective neuronal growth and axon targeting. Probably serves as a recognition molecule for the formation of limbic connections. The chain is Limbic system-associated membrane protein from Gallus gallus (Chicken).